The following is a 383-amino-acid chain: Alkanesulfonate monooxygenase (383 aa).

Belongs to the SsuD family. Homotetramer.

The catalysed reaction is an alkanesulfonate + FMNH2 + O2 = an aldehyde + FMN + sulfite + H2O + 2 H(+). In terms of biological role, catalyzes the desulfonation of aliphatic sulfonates. The polypeptide is Alkanesulfonate monooxygenase (Erwinia pyrifoliae (strain DSM 12163 / CIP 106111 / Ep16/96)).